Here is a 353-residue protein sequence, read N- to C-terminus: Photosystem II protein D1 (353 aa).

Threonine 2 is subject to N-acetylthreonine. Threonine 2 is modified (phosphothreonine). A run of 3 helical transmembrane segments spans residues 29 to 46 (YIGWFGVIMIPTLLTATS), 118 to 133 (HFFLGICCYMGREWEL), and 142 to 156 (WIAVAYSAPVAAATA). Position 118 (histidine 118) interacts with chlorophyll a. Tyrosine 126 serves as a coordination point for pheophytin a. Residues aspartate 170 and glutamate 189 each coordinate [CaMn4O5] cluster. Residues 197 to 218 (FHMLGVAGVFGGSLFSAMHGSL) form a helical membrane-spanning segment. Histidine 198 is a chlorophyll a binding site. A quinone-binding positions include histidine 215 and 264-265 (SF). Histidine 215 is a binding site for Fe cation. Histidine 272 lines the Fe cation pocket. The chain crosses the membrane as a helical span at residues 274–288 (FLAAWPVVGIWFTAL). [CaMn4O5] cluster is bound by residues histidine 332, glutamate 333, aspartate 342, and alanine 344. A propeptide spanning residues 345–353 (SVEAPSVNA) is cleaved from the precursor.

The protein belongs to the reaction center PufL/M/PsbA/D family. As to quaternary structure, PSII is composed of 1 copy each of membrane proteins PsbA, PsbB, PsbC, PsbD, PsbE, PsbF, PsbH, PsbI, PsbJ, PsbK, PsbL, PsbM, PsbT, PsbX, PsbY, PsbZ, Psb30/Ycf12, at least 3 peripheral proteins of the oxygen-evolving complex and a large number of cofactors. It forms dimeric complexes. The D1/D2 heterodimer binds P680, chlorophylls that are the primary electron donor of PSII, and subsequent electron acceptors. It shares a non-heme iron and each subunit binds pheophytin, quinone, additional chlorophylls, carotenoids and lipids. D1 provides most of the ligands for the Mn4-Ca-O5 cluster of the oxygen-evolving complex (OEC). There is also a Cl(-1) ion associated with D1 and D2, which is required for oxygen evolution. The PSII complex binds additional chlorophylls, carotenoids and specific lipids. serves as cofactor. Post-translationally, the 9 C-terminal residues are removed, probably by CTPA (AC O04073); processing is essential to allow assembly of the oxygen-evolving complex and thus photosynthetic growth. Tyr-161 forms a radical intermediate that is referred to as redox-active TyrZ, YZ or Y-Z.

It localises to the plastid. The protein localises to the chloroplast thylakoid membrane. The enzyme catalyses 2 a plastoquinone + 4 hnu + 2 H2O = 2 a plastoquinol + O2. Functionally, photosystem II (PSII) is a light-driven water:plastoquinone oxidoreductase that uses light energy to abstract electrons from H(2)O, generating O(2) and a proton gradient subsequently used for ATP formation. It consists of a core antenna complex that captures photons, and an electron transfer chain that converts photonic excitation into a charge separation. The D1/D2 (PsbA/PsbD) reaction center heterodimer binds P680, the primary electron donor of PSII as well as several subsequent electron acceptors. The chain is Photosystem II protein D1 from Tetradesmus obliquus (Green alga).